Consider the following 642-residue polypeptide: 3D-(3,5/4)-trihydroxycyclohexane-1,2-dione hydrolase (642 aa).

E71 serves as a coordination point for thiamine diphosphate. Residues 446–526 (SLPGDVQRIW…INILVFDNSG (81 aa)) are thiamine pyrophosphate binding. Mg(2+) is bound by residues D497 and N524.

This sequence belongs to the TPP enzyme family. Requires Mg(2+) as cofactor. Thiamine diphosphate serves as cofactor.

The enzyme catalyses 3D-3,5/4-trihydroxycyclohexane-1,2-dione + H2O = 5-deoxy-D-glucuronate + H(+). It functions in the pathway polyol metabolism; myo-inositol degradation into acetyl-CoA; acetyl-CoA from myo-inositol: step 3/7. Functionally, involved in the cleavage of the C1-C2 bond of 3D-(3,5/4)-trihydroxycyclohexane-1,2-dione (THcHDO) to yield 5-deoxy-glucuronate (5DG). The polypeptide is 3D-(3,5/4)-trihydroxycyclohexane-1,2-dione hydrolase (Lacticaseibacillus casei (Lactobacillus casei)).